Here is a 241-residue protein sequence, read N- to C-terminus: tRNA (guanine-N(7)-)-methyltransferase (241 aa).

Residues glycine 61, glutamate 84, arginine 86, asparagine 117, alanine 118, and leucine 137 each coordinate S-adenosyl-L-methionine. Aspartate 140 is an active-site residue. The interval 141–149 (PHFKKTKHK) is alphaC helix. S-adenosyl-L-methionine-binding residues include threonine 215 and glutamate 217. The interval 215–223 (TEEGKKVQR) is alpha6 helix.

Belongs to the class I-like SAM-binding methyltransferase superfamily. TrmB family. In terms of assembly, catalytic component of the METTL1-WDR4 complex, composed of mettl1 and wdr4.

The protein localises to the nucleus. The enzyme catalyses guanosine(46) in tRNA + S-adenosyl-L-methionine = N(7)-methylguanosine(46) in tRNA + S-adenosyl-L-homocysteine. The catalysed reaction is a guanosine in mRNA + S-adenosyl-L-methionine = an N(7)-methylguanosine in mRNA + S-adenosyl-L-homocysteine. It catalyses the reaction a guanosine in miRNA + S-adenosyl-L-methionine = an N(7)-methylguanosine in miRNA + S-adenosyl-L-homocysteine. The protein operates within tRNA modification; N(7)-methylguanine-tRNA biosynthesis. Its function is as follows. Catalytic component of METTL1-WDR4 methyltransferase complex that mediates the formation of N(7)-methylguanine in a subset of RNA species, such as tRNAs, mRNAs and microRNAs (miRNAs). Catalyzes the formation of N(7)-methylguanine at position 46 (m7G46) in a large subset of tRNAs that contain the 5'-RAGGU-3' motif within the variable loop. M7G46 interacts with C13-G22 in the D-loop to stabilize tRNA tertiary structure and protect tRNAs from decay. Also acts as a methyltransferase for a subset of internal N(7)-methylguanine in mRNAs. Internal N(7)-methylguanine methylation of mRNAs in response to stress promotes their relocalization to stress granules, thereby suppressing their translation. Also methylates a specific subset of miRNAs. This Danio rerio (Zebrafish) protein is tRNA (guanine-N(7)-)-methyltransferase (mettl1).